The primary structure comprises 161 residues: Large ribosomal subunit protein uL15 (161 aa).

The tract at residues 1–43 is disordered; that stretch reads MKLSEIADNVGSRKKRMRIGRGIGSGKGKTGGRGGKGQTARSG. Residues 21-37 show a composition bias toward gly residues; it reads RGIGSGKGKTGGRGGKG.

Part of the 50S ribosomal subunit.

Its function is as follows. Binds to the 23S rRNA. This chain is Large ribosomal subunit protein uL15, found in Rhodopseudomonas palustris (strain ATCC BAA-98 / CGA009).